The sequence spans 73 residues: Beta-defensin 40 (73 aa).

A signal peptide spans 1–23 (MKISCFLLMIFFLSCFQINPVAV). 3 disulfides stabilise this stretch: Cys29/Cys58, Cys36/Cys51, and Cys41/Cys59.

It belongs to the beta-defensin family. In terms of tissue distribution, only expressed in epididymis (corpus, cauda and caput).

Its subcellular location is the secreted. Its function is as follows. Has antibacterial activity. The sequence is that of Beta-defensin 40 (Defb40) from Mus musculus (Mouse).